Here is a 313-residue protein sequence, read N- to C-terminus: Ribosomal RNA small subunit methyltransferase H (313 aa).

S-adenosyl-L-methionine contacts are provided by residues 35-37, D55, F81, D103, and Q110; that span reads GGH.

It belongs to the methyltransferase superfamily. RsmH family.

The protein resides in the cytoplasm. It catalyses the reaction cytidine(1402) in 16S rRNA + S-adenosyl-L-methionine = N(4)-methylcytidine(1402) in 16S rRNA + S-adenosyl-L-homocysteine + H(+). Specifically methylates the N4 position of cytidine in position 1402 (C1402) of 16S rRNA. This is Ribosomal RNA small subunit methyltransferase H from Pseudomonas aeruginosa (strain ATCC 15692 / DSM 22644 / CIP 104116 / JCM 14847 / LMG 12228 / 1C / PRS 101 / PAO1).